Here is a 391-residue protein sequence, read N- to C-terminus: Ferrochelatase (391 aa).

His196 and Glu281 together coordinate Fe cation.

It belongs to the ferrochelatase family.

The protein resides in the cytoplasm. The enzyme catalyses heme b + 2 H(+) = protoporphyrin IX + Fe(2+). It functions in the pathway porphyrin-containing compound metabolism; protoheme biosynthesis; protoheme from protoporphyrin-IX: step 1/1. Catalyzes the ferrous insertion into protoporphyrin IX. The chain is Ferrochelatase from Synechococcus sp. (strain CC9605).